Consider the following 99-residue polypeptide: Putative type 4B encapsulin shell protein PF1875 (99 aa).

The protein belongs to the encapsulin family. Family 4B subfamily. In terms of assembly, may self-assemble into facets and potentially into larger complexes.

It is found in the encapsulin nanocompartment. Functionally, may be the encapsulin shell protein in a type 4 A-domain encapsulin nanocompartment system. Its cargo may be upstream glyceraldehyde-3-phosphate dehydrogenase (AC P61879). The sequence is that of Putative type 4B encapsulin shell protein PF1875 from Pyrococcus furiosus (strain ATCC 43587 / DSM 3638 / JCM 8422 / Vc1).